The chain runs to 364 residues: Aminomethyltransferase (364 aa).

The protein belongs to the GcvT family. The glycine cleavage system is composed of four proteins: P, T, L and H.

It catalyses the reaction N(6)-[(R)-S(8)-aminomethyldihydrolipoyl]-L-lysyl-[protein] + (6S)-5,6,7,8-tetrahydrofolate = N(6)-[(R)-dihydrolipoyl]-L-lysyl-[protein] + (6R)-5,10-methylene-5,6,7,8-tetrahydrofolate + NH4(+). Its function is as follows. The glycine cleavage system catalyzes the degradation of glycine. This is Aminomethyltransferase from Salmonella arizonae (strain ATCC BAA-731 / CDC346-86 / RSK2980).